A 499-amino-acid polypeptide reads, in one-letter code: Probable alkaline/neutral invertase F (499 aa).

Ser-11 carries the phosphoserine modification. Thr-20 is subject to Phosphothreonine. Position 497 is a phosphoserine (Ser-497).

The protein belongs to the glycosyl hydrolase 100 family.

The enzyme catalyses Hydrolysis of terminal non-reducing beta-D-fructofuranoside residues in beta-D-fructofuranosides.. In terms of biological role, invertase that cleaves sucrose into glucose and fructose. This chain is Probable alkaline/neutral invertase F, found in Arabidopsis thaliana (Mouse-ear cress).